The following is a 261-amino-acid chain: Cytochrome c oxidase subunit 3 (261 aa).

The Mitochondrial matrix segment spans residues 1–15 (MTHQTHAYHMVNPSP). Residues 16-34 (WPLTGALSALLMTSGLAMW) form a helical membrane-spanning segment. The Mitochondrial intermembrane segment spans residues 35–40 (FHFNST). The chain crosses the membrane as a helical span at residues 41–66 (LLLAMGLLTNILTMYQWWRDIIREST). Topologically, residues 67 to 72 (FQGHHT) are mitochondrial matrix. Residues 73–105 (SIVQKGLRYGMILFIISEVFFFSGFFWAFYHSS) form a helical membrane-spanning segment. Residues 106–128 (LAPTPELGGCWPPTGIHPLNPLE) lie on the Mitochondrial intermembrane side of the membrane. A helical transmembrane segment spans residues 129-152 (VPLLNTSVLLASGVSITWAHHSLM). At 153–155 (EGN) the chain is on the mitochondrial matrix side. Residues 156-183 (RKNMLQGLFITISLGVYFTLLQASEYYE) form a helical membrane-spanning segment. Over 184–190 (ASFTISD) the chain is Mitochondrial intermembrane. A helical membrane pass occupies residues 191 to 223 (GVYGSTFFVATGFHGLHVIIGSTFLIVCFLRQL). Over 224–232 (KFHFTSSHH) the chain is Mitochondrial matrix. Residues 233-256 (FGFEAAAWYWHFVDVVWLFLYVSI) traverse the membrane as a helical segment. Topologically, residues 257 to 261 (YWWGS) are mitochondrial intermembrane.

This sequence belongs to the cytochrome c oxidase subunit 3 family. As to quaternary structure, component of the cytochrome c oxidase (complex IV, CIV), a multisubunit enzyme composed of 14 subunits. The complex is composed of a catalytic core of 3 subunits MT-CO1, MT-CO2 and MT-CO3, encoded in the mitochondrial DNA, and 11 supernumerary subunits COX4I, COX5A, COX5B, COX6A, COX6B, COX6C, COX7A, COX7B, COX7C, COX8 and NDUFA4, which are encoded in the nuclear genome. The complex exists as a monomer or a dimer and forms supercomplexes (SCs) in the inner mitochondrial membrane with NADH-ubiquinone oxidoreductase (complex I, CI) and ubiquinol-cytochrome c oxidoreductase (cytochrome b-c1 complex, complex III, CIII), resulting in different assemblies (supercomplex SCI(1)III(2)IV(1) and megacomplex MCI(2)III(2)IV(2)).

It is found in the mitochondrion inner membrane. It carries out the reaction 4 Fe(II)-[cytochrome c] + O2 + 8 H(+)(in) = 4 Fe(III)-[cytochrome c] + 2 H2O + 4 H(+)(out). In terms of biological role, component of the cytochrome c oxidase, the last enzyme in the mitochondrial electron transport chain which drives oxidative phosphorylation. The respiratory chain contains 3 multisubunit complexes succinate dehydrogenase (complex II, CII), ubiquinol-cytochrome c oxidoreductase (cytochrome b-c1 complex, complex III, CIII) and cytochrome c oxidase (complex IV, CIV), that cooperate to transfer electrons derived from NADH and succinate to molecular oxygen, creating an electrochemical gradient over the inner membrane that drives transmembrane transport and the ATP synthase. Cytochrome c oxidase is the component of the respiratory chain that catalyzes the reduction of oxygen to water. Electrons originating from reduced cytochrome c in the intermembrane space (IMS) are transferred via the dinuclear copper A center (CU(A)) of subunit 2 and heme A of subunit 1 to the active site in subunit 1, a binuclear center (BNC) formed by heme A3 and copper B (CU(B)). The BNC reduces molecular oxygen to 2 water molecules using 4 electrons from cytochrome c in the IMS and 4 protons from the mitochondrial matrix. The sequence is that of Cytochrome c oxidase subunit 3 (MT-CO3) from Equus caballus (Horse).